Consider the following 428-residue polypeptide: MNYLFKNGRYMNEEGKIVATDLLVQDGKIAKVAENITADNAEVIDVNGKLIAPGLVDVHVHLREPGGEHKETIETGTLAAAKGGFTTICAMPNTRPVPDCREHMEDLQKRIEEKAHVNVLPYGAITVRQAGSEMTDFETLKELGAFAFTDDGVGVQDANMMLAAMKRAAKLDMAVVAHCEENTLINKGCVHEGKFSEKHGLNGIPSVCESVHIARDILLAEAADCHYHVCHVSTKGSVRVIRDAKRAGIKVTAEVTPHHLVLCEDDIPSADPNFKMNPPLRGKEDHAALIEGLLDGTIDMIATDHAPHTAEEKAQGIERAPFGITGFETAFPLLYTNLVKKGVITLEQLIQFLTEKPADTFGLEAGRLKEGRAADITIIDLEQEEEIDPTTFLSKGKNTPFAGWKCQGWPVMTIVGGKIAWQKESALV.

His59 and His61 together coordinate Zn(2+). Substrate contacts are provided by residues 61-63 (HLR) and Asn93. Zn(2+) is bound by residues Asp151, His178, and His231. Asn277 provides a ligand contact to substrate. Asp304 contacts Zn(2+). Residue Asp304 is part of the active site. Substrate contacts are provided by residues His308 and 322–323 (FG).

It belongs to the metallo-dependent hydrolases superfamily. DHOase family. Class I DHOase subfamily. It depends on Zn(2+) as a cofactor.

The enzyme catalyses (S)-dihydroorotate + H2O = N-carbamoyl-L-aspartate + H(+). Its pathway is pyrimidine metabolism; UMP biosynthesis via de novo pathway; (S)-dihydroorotate from bicarbonate: step 3/3. In terms of biological role, catalyzes the reversible cyclization of carbamoyl aspartate to dihydroorotate. This is Dihydroorotase from Bacillus cereus (strain B4264).